Here is a 250-residue protein sequence, read N- to C-terminus: Aquaporin SIP2-1 (250 aa).

The next 2 membrane-spanning stretches (helical) occupy residues 14 to 34 (PWLVVGDLVVAAMWVCAGALV) and 55 to 75 (VALSLVYMFFFAWLEGFTGGA). Positions 78 to 80 (NPL) match the NPA 1 motif. A run of 4 helical transmembrane segments spans residues 95–115 (LYLFAAFVRMPAQVFGSILGV), 132–152 (SVGVHHGALAEGLATFMVVIV), 178–200 (FHLLSSDITGGVMNPASAFAWAY), and 211–231 (LLVYWLAPLQATLLGVWVVTL). The short motif at 191 to 193 (NPA) is the NPA 2 element.

This sequence belongs to the MIP/aquaporin (TC 1.A.8) family. SIP (TC 1.A.8.10) subfamily. As to expression, expressed in leaves and anthers, and at lower levels in roots.

It localises to the membrane. In terms of biological role, aquaporins facilitate the transport of water and small neutral solutes across cell membranes. The chain is Aquaporin SIP2-1 (SIP2-1) from Oryza sativa subsp. japonica (Rice).